Here is a 190-residue protein sequence, read N- to C-terminus: dITP/XTP pyrophosphatase (190 aa).

Position 7–12 (7–12 (THNPNK)) interacts with substrate. Residues glutamate 39 and aspartate 68 each coordinate Mg(2+). Catalysis depends on aspartate 68, which acts as the Proton acceptor. Substrate is bound by residues threonine 69, 148–151 (FGYD), lysine 171, and 176–177 (HR).

It belongs to the HAM1 NTPase family. As to quaternary structure, homodimer. Requires Mg(2+) as cofactor.

The catalysed reaction is XTP + H2O = XMP + diphosphate + H(+). It catalyses the reaction dITP + H2O = dIMP + diphosphate + H(+). The enzyme catalyses ITP + H2O = IMP + diphosphate + H(+). Pyrophosphatase that catalyzes the hydrolysis of nucleoside triphosphates to their monophosphate derivatives, with a high preference for the non-canonical purine nucleotides XTP (xanthosine triphosphate), dITP (deoxyinosine triphosphate) and ITP. Seems to function as a house-cleaning enzyme that removes non-canonical purine nucleotides from the nucleotide pool, thus preventing their incorporation into DNA/RNA and avoiding chromosomal lesions. In Christiangramia forsetii (strain DSM 17595 / CGMCC 1.15422 / KT0803) (Gramella forsetii), this protein is dITP/XTP pyrophosphatase.